An 807-amino-acid polypeptide reads, in one-letter code: Phenylalanine--tRNA ligase beta subunit (807 aa).

Residues 39–153 enclose the tRNA-binding domain; sequence SARAQGVVVG…SLPPNGSPVA (115 aa). In terms of domain architecture, B5 spans 407–491; the sequence is AEAGPVLLRR…RLVGFDRFGA (85 aa). 4 residues coordinate Mg(2+): Asp469, Asp475, Glu478, and Glu479. The region spanning 713-806 is the FDX-ACB domain; sequence PTVPFSERDL…LSKQFQAELR (94 aa).

This sequence belongs to the phenylalanyl-tRNA synthetase beta subunit family. Type 1 subfamily. Tetramer of two alpha and two beta subunits. Mg(2+) serves as cofactor.

It localises to the cytoplasm. The enzyme catalyses tRNA(Phe) + L-phenylalanine + ATP = L-phenylalanyl-tRNA(Phe) + AMP + diphosphate + H(+). In Synechococcus sp. (strain CC9605), this protein is Phenylalanine--tRNA ligase beta subunit.